A 142-amino-acid chain; its full sequence is Domesticated amidase effector 2 (142 aa).

Residues 1-35 (MKLFLISAALVVLGLAAVADAIGCSDPSPFQGRWV) form the signal peptide. Residues cysteine 43 and histidine 94 contribute to the active site.

It belongs to the cell wall amidase Dae2/Tae2-like family. Post-translationally, may be post-translationally modified, since the saliva wild-type protein is slightly heavier than the recombinant one. Detected in salivary glands and in the gut (at protein level).

It localises to the secreted. Its function is as follows. Tick gut and saliva antibacterial peptide that directly antagonizes host skin commensals which enter the ticks during feeding. Acts as a cell wall hydrolase that cleaves the bond between gamma-D-glutamate-meso-diaminopimelate of a peptide stem and D-alanine of another peptide stem in peptidoglycans. In vitro, degrades peptidoglycans from both Gram-negative and Gram-positive bacteria. Is not able to traverse the protective outer membrane of Gram-negative bacteria. Is not able to kill Borrelia burgdorferi, one of the Lyme disease-causing bacteria. The protein is Domesticated amidase effector 2 of Ixodes scapularis (Black-legged tick).